A 162-amino-acid chain; its full sequence is Allophycocyanin subunit beta (162 aa).

N4-methylasparagine is present on Asn72. Cys82 is a (2R,3E)-phycocyanobilin binding site.

It belongs to the phycobiliprotein family. As to quaternary structure, heterohexamer of two alpha chains, one alpha-B chain and three beta chains. In terms of processing, contains one covalently linked phycocyanobilin chromophore. The chromophore is added by phycocyanobilin lyase CpcS 1.

Its subcellular location is the cellular thylakoid membrane. In terms of biological role, light-harvesting photosynthetic bile pigment-protein from the phycobiliprotein complex. Allophycocyanin has a maximum absorption at approximately 650 to 653 nanometers. This is Allophycocyanin subunit beta (apcB) from Nostoc sp. (strain PCC 7120 / SAG 25.82 / UTEX 2576).